We begin with the raw amino-acid sequence, 4307 residues long: Cytoplasmic dynein 2 heavy chain 1 (4307 aa).

Residues 1–1650 (MANGTADVRK…CVQMVDSEFQ (1650 aa)) are stem. Residue 145-152 (LGIVLRRS) coordinates ATP. The stretch at 1074–1103 (NTLDKSAKLIKEKKIEFDDLEVTRKKLVDD) forms a coiled coil. AAA stretches follow at residues 1651–1875 (YTYE…VLRG), 1938–2161 (ELSA…KQND), 2251–2505 (ADDF…WVLG), and 2617–2863 (HYGR…ESCK). ATP is bound by residues 1689-1696 (GPAGTGKT), 1979-1986 (GPSGAGKS), 2291-2298 (GPEGCGKG), and 2655-2662 (GRSGVGRR). The tract at residues 2881–3169 (AISSSKKKEL…AEVSKAQETI (289 aa)) is stalk. 3 coiled-coil regions span residues 2897 to 2982 (LQAG…KEVQ), 3109 to 3200 (LETE…LATL), and 3408 to 3442 (IQHE…SLLE). 2 AAA regions span residues 3244-3473 (LCTE…LIQE) and 3690-3905 (MALF…IIDR).

Belongs to the dynein heavy chain family. In terms of assembly, the cytoplasmic dynein complex 2 is probably composed by a heavy chain DYNC2H1 homodimer and a number of DYNC2LI1 light intermediate chains.

The protein resides in the cytoplasm. It localises to the cytoskeleton. Its subcellular location is the cilium axoneme. The protein localises to the cell membrane. Its function is as follows. May function as a motor for intraflagellar retrograde transport. Functions in cilia biogenesis. May play a role in transport between endoplasmic reticulum and Golgi or organization of the Golgi in cells. The polypeptide is Cytoplasmic dynein 2 heavy chain 1 (DYNC2H1) (Homo sapiens (Human)).